The chain runs to 227 residues: PKHD-type hydroxylase Bamb_4479 (227 aa).

A Fe2OG dioxygenase domain is found at 80 to 179 (QVYPPLFNRY…RVASFFWVQS (100 aa)). Residues His98, Asp100, and His160 each contribute to the Fe cation site. Arg170 provides a ligand contact to 2-oxoglutarate.

Requires Fe(2+) as cofactor. It depends on L-ascorbate as a cofactor.

This Burkholderia ambifaria (strain ATCC BAA-244 / DSM 16087 / CCUG 44356 / LMG 19182 / AMMD) (Burkholderia cepacia (strain AMMD)) protein is PKHD-type hydroxylase Bamb_4479.